A 716-amino-acid polypeptide reads, in one-letter code: 1,4-alpha-glucan branching enzyme GlgB (716 aa).

Aspartate 399 functions as the Nucleophile in the catalytic mechanism. Residue glutamate 452 is the Proton donor of the active site.

It belongs to the glycosyl hydrolase 13 family. GlgB subfamily. As to quaternary structure, monomer.

It carries out the reaction Transfers a segment of a (1-&gt;4)-alpha-D-glucan chain to a primary hydroxy group in a similar glucan chain.. Its pathway is glycan biosynthesis; glycogen biosynthesis. Catalyzes the formation of the alpha-1,6-glucosidic linkages in glycogen by scission of a 1,4-alpha-linked oligosaccharide from growing alpha-1,4-glucan chains and the subsequent attachment of the oligosaccharide to the alpha-1,6 position. The protein is 1,4-alpha-glucan branching enzyme GlgB of Rhodopseudomonas palustris (strain BisB5).